Consider the following 978-residue polypeptide: Exocyst complex component 5 (978 aa).

Positions 1 to 11 are enriched in polar residues; sequence MSWARNIQSRI. Disordered regions lie at residues 1 to 87 and 122 to 246; these read MSWA…TTTQ and TSPS…TTPY. Composition is skewed to low complexity over residues 36–52 and 62–86; these read PSSP…TSLT and SQPT…TTTT. Polar residues predominate over residues 122-142; sequence TSPSMASPIGTSTGIQNPNAK. Residues 143 to 245 show a composition bias toward low complexity; that stretch reads PSSLPSPSQS…QPTPIKQTTP (103 aa). Residues 303–325 are a coiled coil; sequence NTQLQLSQLESNIDRRLDDLAEE.

The protein belongs to the SEC10 family. The exocyst complex is composed of sec3/exoc1, sec5/exoc2, sec6/exoc3, sec8/exoc4, sec10/exoc5, sec15/exoc6, exo70/exoc7 and exo84/exoc8.

In terms of biological role, component of the exocyst complex involved in the docking of exocytic vesicles with fusion sites on the plasma membrane. The polypeptide is Exocyst complex component 5 (exoc5) (Dictyostelium discoideum (Social amoeba)).